A 127-amino-acid chain; its full sequence is HTH-type transcriptional regulator ImmR (127 aa).

The segment covering 1 to 12 has biased composition (basic and acidic residues); sequence MSLGKRLKEARQ. The segment at 1–22 is disordered; it reads MSLGKRLKEARQKAGYTQKEAA. The region spanning 7 to 61 is the HTH cro/C1-type domain; the sequence is LKEARQKAGYTQKEAAEKLNIGNNNLSNYERDYRDPDTDTLLKLSNLYNVSTDYL. Positions 18 to 37 form a DNA-binding region, H-T-H motif; the sequence is QKEAAEKLNIGNNNLSNYER.

This Bacillus subtilis (strain 168) protein is HTH-type transcriptional regulator ImmR (immR).